A 534-amino-acid polypeptide reads, in one-letter code: EH domain-containing protein 1 (534 aa).

M1 bears the N-acetylmethionine mark. The Dynamin-type G domain occupies F55–P286. The tract at residues G65–T72 is G1 motif. An ATP-binding site is contributed by G65–T72. Residues E91–P92 form a G2 motif region. The segment at D153–G156 is G3 motif. A coiled-coil region spans residues D198–Q227. The interval N219–D222 is G4 motif. K220 contacts ATP. A region of interest (G5 motif) is located at residue I243. ATP is bound at residue W258. Residues D444–R532 enclose the EH domain. S456 bears the Phosphoserine mark. The EF-hand domain occupies L476–K511. 4 residues coordinate Ca(2+): D489, D491, D493, and E500.

This sequence belongs to the TRAFAC class dynamin-like GTPase superfamily. Dynamin/Fzo/YdjA family. EHD subfamily. As to quaternary structure, homooligomer, and heterooligomer with EHD2, EHD3 and EHD4, ATP-binding is required for heterooligomerization. Interacts (via EH domain) with MICALL1 (via NPF1 motif); the interaction is direct and recruits EHD1 to membranes. Interacts with RAB35; the interaction is indirect through MICALL1 and recruits EHD1 to membranes. Interacts (via EH domain) with PACSIN2 (via NPF motifs); regulates localization to tubular recycling endosome membranes. Interacts with PACSIN1. Interacts with RAB8A. Interacts with FER1L5 (via second C2 domain). Interacts with MYOF. Interacts with ZFYVE20. Interacts (via EH domain) with RAB11FIP2.

Its subcellular location is the recycling endosome membrane. It localises to the early endosome membrane. It is found in the cell membrane. The protein resides in the cell projection. The protein localises to the cilium membrane. ATP- and membrane-binding protein that controls membrane reorganization/tubulation upon ATP hydrolysis. Acts in early endocytic membrane fusion and membrane trafficking of recycling endosomes. Recruited to endosomal membranes upon nerve growth factor stimulation, indirectly regulates neurite outgrowth. Plays a role in myoblast fusion. Involved in the unidirectional retrograde dendritic transport of endocytosed BACE1 and in efficient sorting of BACE1 to axons implicating a function in neuronal APP processing. Plays a role in the formation of the ciliary vesicle (CV), an early step in cilium biogenesis. Proposed to be required for the fusion of distal appendage vesicles (DAVs) to form the CV by recruiting SNARE complex component SNAP29. Is required for recruitment of transition zone proteins CEP290, RPGRIP1L, TMEM67 and B9D2, and of IFT20 following DAV reorganization before Rab8-dependent ciliary membrane extension. Required for the loss of CCP110 form the mother centriole essential for the maturation of the basal body during ciliogenesis. The polypeptide is EH domain-containing protein 1 (Bos taurus (Bovine)).